The sequence spans 186 residues: Small ribosomal subunit protein uS7 (186 aa).

It belongs to the universal ribosomal protein uS7 family. As to quaternary structure, part of the 30S ribosomal subunit.

One of the primary rRNA binding proteins, it binds directly to 16S rRNA where it nucleates assembly of the head domain of the 30S subunit. Is located at the subunit interface close to the decoding center. The protein is Small ribosomal subunit protein uS7 of Methanococcoides burtonii (strain DSM 6242 / NBRC 107633 / OCM 468 / ACE-M).